A 375-amino-acid polypeptide reads, in one-letter code: Alcohol dehydrogenase 1 (375 aa).

An N-acetylserine modification is found at Ser-2. Cys-47, His-68, Cys-98, Cys-101, Cys-104, Cys-112, and Cys-175 together coordinate Zn(2+). Residues 200–205, Asp-224, and Lys-229 contribute to the NAD(+) site; that span reads GLGGVG. Position 234 is an N6-succinyllysine (Lys-234). An NAD(+)-binding site is contributed by 293-295; that stretch reads VGV. N6-succinyllysine is present on Lys-340. Position 370 (Arg-370) interacts with NAD(+).

Belongs to the zinc-containing alcohol dehydrogenase family. Class-I subfamily. As to quaternary structure, dimer of identical or non-identical chains of three types (A, B, C), which are coded by 3 separate genes at different loci. Zn(2+) is required as a cofactor. In terms of tissue distribution, expressed at high levels in the liver, small intestine and eye, at moderate levels in kidney, ovary and uterus, and at low levels in the spinal cord, thymus, heart, stomach mucosa, skin and testis.

The protein localises to the cytoplasm. The catalysed reaction is a primary alcohol + NAD(+) = an aldehyde + NADH + H(+). It carries out the reaction a secondary alcohol + NAD(+) = a ketone + NADH + H(+). The protein is Alcohol dehydrogenase 1 (Adh1) of Mus musculus (Mouse).